The following is a 303-amino-acid chain: Elongation factor Ts (303 aa).

The segment at 81–84 is involved in Mg(2+) ion dislocation from EF-Tu; sequence TDFV.

This sequence belongs to the EF-Ts family.

Its subcellular location is the cytoplasm. Its function is as follows. Associates with the EF-Tu.GDP complex and induces the exchange of GDP to GTP. It remains bound to the aminoacyl-tRNA.EF-Tu.GTP complex up to the GTP hydrolysis stage on the ribosome. The protein is Elongation factor Ts of Mesomycoplasma hyopneumoniae (strain 232) (Mycoplasma hyopneumoniae).